Here is a 371-residue protein sequence, read N- to C-terminus: ADP-ribosylarginine hydrolase Tri1 (371 aa).

Residues 1 to 61 (MIDLRSPNAL…LQSRACTLTP (61 aa)) are N-terminal extension. The tract at residues 70–362 (GALLGLAIGD…LFDRAPQVDE (293 aa)) is ADP-ribosyl hydrolase domain. Mg(2+) contacts are provided by Thr112, Asp113, Asp114, Asp157, and Asp313.

It belongs to the ADP-ribosylglycohydrolase family. Requires Mg(2+) as cofactor.

The enzyme catalyses N(omega)-(ADP-D-ribosyl)-L-arginyl-[protein] + H2O = ADP-D-ribose + L-arginyl-[protein]. Immunity component of an interbacterial competition system (also called effector-immunity systems). Expression in E.coli neutralizes the toxic effects of non-cognate S.proteamaculans effector protein Tre1 (Tre1-Sp); cannot be co-purified with Tre1-Sp from E.coli, suggesting they do not form a stable complex. Probably acts as an arginine mono-ADP-ribosylhydrolase, mediating the removal of mono-ADP-ribose attached to arginine residues on proteins. Probably de-ADP-ribosylates FtsZ and possibly other proteins; the ability to hydrolyze ADP-ribosyl moieties is not essential for neutralization of its cognate toxin, strongly suggesting its N-terminal extension occludes the active site of cognate toxin Tre1. The chain is ADP-ribosylarginine hydrolase Tri1 from Pseudomonas putida (strain GB-1).